A 133-amino-acid chain; its full sequence is MDNLFSRITGEQPLSENPNYNLIQLDKYNYELSVSVPGYKKEELEVSIINNRLNINSKSKKEKEKETKKINWIHQGILKNNFSISFKLEHKIKIKYANLKHGILNLSFFYDLPDQEKPKKISINEEHDHKCNI.

Positions 11–126 (EQPLSENPNY…KPKKISINEE (116 aa)) constitute a sHSP domain.

This sequence belongs to the small heat shock protein (HSP20) family.

The chain is Small heat shock protein ibp (ibp) from Wigglesworthia glossinidia brevipalpis.